The sequence spans 124 residues: UPF0337 protein blr1496 (124 aa).

This sequence belongs to the UPF0337 (CsbD) family.

The chain is UPF0337 protein blr1496 from Bradyrhizobium diazoefficiens (strain JCM 10833 / BCRC 13528 / IAM 13628 / NBRC 14792 / USDA 110).